The following is a 60-amino-acid chain: Mastoparan-VB1 (60 aa).

The signal sequence occupies residues 1-23; sequence MKNTILLLFTAFIFLSGFFGMSA. Positions 24–45 are excised as a propeptide; the sequence is EALADPKADPLAGPFPDADPDP. 4 AXPX repeats span residues 27–30, 31–34, 35–38, and 40–43; these read ADPK, ADPL, AGPF, and DADP. Residue Leu59 is modified to Leucine amide.

As to expression, expressed by the venom gland.

It is found in the secreted. The protein resides in the target cell membrane. Functionally, antimicrobial peptide. Shows activity against both Gram-positive (S.aureus MIC=1.9-3.75 ug/ml) and -negative (E.coli MIC=15-60 ug/ml) bacteria, as well against fungi (C.albicans MIC=15 ug/ml). Also promotes moderate mast cell degranulation. Does not show hemolytic activity on rabbit and human erythrocytes. Its mast cell degranulation activity may be related to the activation of G-protein coupled receptors in mast cells as well as interaction with other proteins located in cell endosomal membranes in the mast cells. The chain is Mastoparan-VB1 from Vespa bicolor (Black shield wasp).